A 362-amino-acid chain; its full sequence is Aminomethyltransferase (362 aa).

This sequence belongs to the GcvT family. The glycine cleavage system is composed of four proteins: P, T, L and H.

The enzyme catalyses N(6)-[(R)-S(8)-aminomethyldihydrolipoyl]-L-lysyl-[protein] + (6S)-5,6,7,8-tetrahydrofolate = N(6)-[(R)-dihydrolipoyl]-L-lysyl-[protein] + (6R)-5,10-methylene-5,6,7,8-tetrahydrofolate + NH4(+). Its function is as follows. The glycine cleavage system catalyzes the degradation of glycine. This is Aminomethyltransferase from Listeria innocua serovar 6a (strain ATCC BAA-680 / CLIP 11262).